A 256-amino-acid polypeptide reads, in one-letter code: Undecaprenyl-diphosphatase (256 aa).

A run of 7 helical transmembrane segments spans residues 39–59 (PTDA…AVLV), 77–97 (RTVI…YMLF), 101–121 (FTGG…TGLM), 135–155 (ISTK…LPGV), 176–196 (LMVS…LDCL), 206–226 (LPGA…MDVL), and 233–253 (VSFS…TALP).

The protein belongs to the UppP family.

It localises to the cell membrane. It carries out the reaction di-trans,octa-cis-undecaprenyl diphosphate + H2O = di-trans,octa-cis-undecaprenyl phosphate + phosphate + H(+). In terms of biological role, catalyzes the dephosphorylation of undecaprenyl diphosphate (UPP). This chain is Undecaprenyl-diphosphatase, found in Methanothrix thermoacetophila (strain DSM 6194 / JCM 14653 / NBRC 101360 / PT) (Methanosaeta thermophila).